The chain runs to 149 residues: Nucleoside diphosphate kinase (149 aa).

Lys9, Phe57, Arg85, Thr91, Arg102, and Asn112 together coordinate ATP. The active-site Pros-phosphohistidine intermediate is the His115.

This sequence belongs to the NDK family. In terms of assembly, homotetramer. Mg(2+) serves as cofactor.

Its subcellular location is the cytoplasm. It carries out the reaction a 2'-deoxyribonucleoside 5'-diphosphate + ATP = a 2'-deoxyribonucleoside 5'-triphosphate + ADP. The enzyme catalyses a ribonucleoside 5'-diphosphate + ATP = a ribonucleoside 5'-triphosphate + ADP. Major role in the synthesis of nucleoside triphosphates other than ATP. The ATP gamma phosphate is transferred to the NDP beta phosphate via a ping-pong mechanism, using a phosphorylated active-site intermediate. This is Nucleoside diphosphate kinase from Staphylococcus saprophyticus subsp. saprophyticus (strain ATCC 15305 / DSM 20229 / NCIMB 8711 / NCTC 7292 / S-41).